Here is a 460-residue protein sequence, read N- to C-terminus: GTPase Der (460 aa).

EngA-type G domains lie at 9-171 (KTIA…SLNQ) and 199-370 (IQVG…ECFS). GTP contacts are provided by residues 15–22 (GQPNVGKS), 62–66 (DTGGM), 123–126 (NKID), 205–212 (GRVNVGKS), 252–256 (DTAGI), and 316–319 (NKWD). A KH-like domain is found at 371-455 (RRIPTSLLNS…PLILNAKDKK (85 aa)).

It belongs to the TRAFAC class TrmE-Era-EngA-EngB-Septin-like GTPase superfamily. EngA (Der) GTPase family. As to quaternary structure, associates with the 50S ribosomal subunit.

Functionally, GTPase that plays an essential role in the late steps of ribosome biogenesis. The polypeptide is GTPase Der (Helicobacter pylori (strain G27)).